The chain runs to 323 residues: tRNA U34 carboxymethyltransferase (323 aa).

Carboxy-S-adenosyl-L-methionine-binding positions include lysine 91, tryptophan 105, lysine 110, glycine 130, 152-154 (DPT), 181-182 (IE), methionine 196, tyrosine 200, and arginine 315.

Belongs to the class I-like SAM-binding methyltransferase superfamily. CmoB family. As to quaternary structure, homotetramer.

The enzyme catalyses carboxy-S-adenosyl-L-methionine + 5-hydroxyuridine(34) in tRNA = 5-carboxymethoxyuridine(34) in tRNA + S-adenosyl-L-homocysteine + H(+). Functionally, catalyzes carboxymethyl transfer from carboxy-S-adenosyl-L-methionine (Cx-SAM) to 5-hydroxyuridine (ho5U) to form 5-carboxymethoxyuridine (cmo5U) at position 34 in tRNAs. The protein is tRNA U34 carboxymethyltransferase of Escherichia coli (strain SE11).